The chain runs to 262 residues: Phosphate import ATP-binding protein PstB 2 (262 aa).

Residues 18–257 form the ABC transporter domain; sequence FVVRNLDLFY…PSDRRTEDYI (240 aa). 50–57 is an ATP binding site; it reads GPSGCGKS.

The protein belongs to the ABC transporter superfamily. Phosphate importer (TC 3.A.1.7) family. In terms of assembly, the complex is composed of two ATP-binding proteins (PstB), two transmembrane proteins (PstC and PstA) and a solute-binding protein (PstS).

It localises to the cell membrane. It catalyses the reaction phosphate(out) + ATP + H2O = ADP + 2 phosphate(in) + H(+). Part of the ABC transporter complex PstSACB involved in phosphate import. Responsible for energy coupling to the transport system. The protein is Phosphate import ATP-binding protein PstB 2 of Symbiobacterium thermophilum (strain DSM 24528 / JCM 14929 / IAM 14863 / T).